A 96-amino-acid chain; its full sequence is (4S)-4-hydroxy-5-phosphonooxypentane-2,3-dione isomerase (96 aa).

The ABM domain maps to 2-91; that stretch reads HVTLVEINVK…MTGPRKKTVF (90 aa).

It belongs to the LsrG family. As to quaternary structure, homodimer.

The protein resides in the cytoplasm. It carries out the reaction (2S)-2-hydroxy-3,4-dioxopentyl phosphate = 3-hydroxy-2,4-dioxopentyl phosphate. Involved in the degradation of phospho-AI-2, thereby terminating induction of the lsr operon and closing the AI-2 signaling cycle. Catalyzes the conversion of (4S)-4-hydroxy-5-phosphonooxypentane-2,3-dione (P-DPD) to 3-hydroxy-5-phosphonooxypentane-2,4-dione (P-HPD). This Yersinia pseudotuberculosis serotype O:1b (strain IP 31758) protein is (4S)-4-hydroxy-5-phosphonooxypentane-2,3-dione isomerase.